We begin with the raw amino-acid sequence, 179 residues long: Large ribosomal subunit protein uL6 (179 aa).

Belongs to the universal ribosomal protein uL6 family. Part of the 50S ribosomal subunit.

This protein binds to the 23S rRNA, and is important in its secondary structure. It is located near the subunit interface in the base of the L7/L12 stalk, and near the tRNA binding site of the peptidyltransferase center. In Finegoldia magna (strain ATCC 29328 / DSM 20472 / WAL 2508) (Peptostreptococcus magnus), this protein is Large ribosomal subunit protein uL6.